Reading from the N-terminus, the 135-residue chain is Protein PsiE homolog (135 aa).

4 helical membrane-spanning segments follow: residues 20 to 40, 54 to 74, 82 to 102, and 107 to 127; these read VGLIMLAAILVVFLVKETIHL, YMLIEGIVIYFLYFEFIALIV, HFPLRYFIYIGITAIIRLIIV, and PIDTLIYSGSILVLVVTLYLA.

Belongs to the PsiE family.

It is found in the cell inner membrane. The polypeptide is Protein PsiE homolog (Yersinia pseudotuberculosis serotype IB (strain PB1/+)).